We begin with the raw amino-acid sequence, 34 residues long: Protamine-Z1/Z2 (34 aa).

Positions Pro-1 to Arg-34 are disordered.

In terms of tissue distribution, testis.

It is found in the nucleus. It localises to the chromosome. Its function is as follows. Protamines substitute for histones in the chromatin of sperm during the haploid phase of spermatogenesis. They compact sperm DNA into a highly condensed, stable and inactive complex. The polypeptide is Protamine-Z1/Z2 (Thunnus thynnus (Atlantic bluefin tuna)).